Reading from the N-terminus, the 394-residue chain is Elongation factor Tu (394 aa).

Positions Lys-10–Thr-204 constitute a tr-type G domain. The G1 stretch occupies residues Gly-19–Thr-26. GTP is bound at residue Gly-19 to Thr-26. Thr-26 provides a ligand contact to Mg(2+). The segment at Gly-60 to Asn-64 is G2. A G3 region spans residues Asp-81–Gly-84. GTP is bound by residues Asp-81–His-85 and Asn-136–Asp-139. The G4 stretch occupies residues Asn-136–Asp-139. A G5 region spans residues Ser-174–Leu-176.

The protein belongs to the TRAFAC class translation factor GTPase superfamily. Classic translation factor GTPase family. EF-Tu/EF-1A subfamily. Monomer.

The protein localises to the cytoplasm. The enzyme catalyses GTP + H2O = GDP + phosphate + H(+). Functionally, GTP hydrolase that promotes the GTP-dependent binding of aminoacyl-tRNA to the A-site of ribosomes during protein biosynthesis. This chain is Elongation factor Tu, found in Mycoplasma genitalium (strain ATCC 33530 / DSM 19775 / NCTC 10195 / G37) (Mycoplasmoides genitalium).